Consider the following 77-residue polypeptide: Antitoxin VapB2 (77 aa).

Residues 4–46 (ASVFMTNRSQAVRLPAEVRFSEEIKKLSVRVSGSDRILSPLNQ) form the SpoVT-AbrB domain.

Belongs to the VapB family. As to quaternary structure, probably forms a complex with cognate toxin VapC2.

Antitoxin component of a type II toxin-antitoxin (TA) system. Neutralizes the effect of cognate toxin VapC2 but not non-cognate toxin VapC2. The protein is Antitoxin VapB2 of Haemophilus influenzae (strain 86-028NP).